A 298-amino-acid polypeptide reads, in one-letter code: Lipoyl synthase (298 aa).

The [4Fe-4S] cluster site is built by Cys40, Cys45, Cys51, Cys67, Cys71, Cys74, and Ser280. In terms of domain architecture, Radical SAM core spans 53–269 (AVRKTATFMI…KEIALSKGFS (217 aa)).

The protein belongs to the radical SAM superfamily. Lipoyl synthase family. [4Fe-4S] cluster is required as a cofactor.

It localises to the cytoplasm. It catalyses the reaction [[Fe-S] cluster scaffold protein carrying a second [4Fe-4S](2+) cluster] + N(6)-octanoyl-L-lysyl-[protein] + 2 oxidized [2Fe-2S]-[ferredoxin] + 2 S-adenosyl-L-methionine + 4 H(+) = [[Fe-S] cluster scaffold protein] + N(6)-[(R)-dihydrolipoyl]-L-lysyl-[protein] + 4 Fe(3+) + 2 hydrogen sulfide + 2 5'-deoxyadenosine + 2 L-methionine + 2 reduced [2Fe-2S]-[ferredoxin]. Its pathway is protein modification; protein lipoylation via endogenous pathway; protein N(6)-(lipoyl)lysine from octanoyl-[acyl-carrier-protein]. Its function is as follows. Catalyzes the radical-mediated insertion of two sulfur atoms into the C-6 and C-8 positions of the octanoyl moiety bound to the lipoyl domains of lipoate-dependent enzymes, thereby converting the octanoylated domains into lipoylated derivatives. In Bacillus anthracis (strain A0248), this protein is Lipoyl synthase.